We begin with the raw amino-acid sequence, 464 residues long: Kynureninase 2 (464 aa).

Pyridoxal 5'-phosphate contacts are provided by residues leucine 135, threonine 136, 163 to 166 (FPSD), aspartate 248, histidine 251, and tyrosine 273. The residue at position 274 (lysine 274) is an N6-(pyridoxal phosphate)lysine. The pyridoxal 5'-phosphate site is built by tryptophan 313 and asparagine 341.

Belongs to the kynureninase family. As to quaternary structure, homodimer. The cofactor is pyridoxal 5'-phosphate.

It localises to the cytoplasm. It carries out the reaction L-kynurenine + H2O = anthranilate + L-alanine + H(+). The catalysed reaction is 3-hydroxy-L-kynurenine + H2O = 3-hydroxyanthranilate + L-alanine + H(+). The protein operates within amino-acid degradation; L-kynurenine degradation; L-alanine and anthranilate from L-kynurenine: step 1/1. It participates in cofactor biosynthesis; NAD(+) biosynthesis; quinolinate from L-kynurenine: step 2/3. Its function is as follows. Catalyzes the cleavage of L-kynurenine (L-Kyn) and L-3-hydroxykynurenine (L-3OHKyn) into anthranilic acid (AA) and 3-hydroxyanthranilic acid (3-OHAA), respectively. The sequence is that of Kynureninase 2 (bna5-2) from Aspergillus clavatus (strain ATCC 1007 / CBS 513.65 / DSM 816 / NCTC 3887 / NRRL 1 / QM 1276 / 107).